We begin with the raw amino-acid sequence, 262 residues long: ATP synthase subunit a (262 aa).

6 consecutive transmembrane segments (helical) span residues isoleucine 32 to valine 52, leucine 98 to isoleucine 118, phenylalanine 127 to tryptophan 147, phenylalanine 153 to isoleucine 173, leucine 189 to aspartate 209, and leucine 219 to valine 239.

Belongs to the ATPase A chain family. As to quaternary structure, F-type ATPases have 2 components, CF(1) - the catalytic core - and CF(0) - the membrane proton channel. CF(1) has five subunits: alpha(3), beta(3), gamma(1), delta(1), epsilon(1). CF(0) has four main subunits: a, b, b' and c.

The protein localises to the cell inner membrane. Its function is as follows. Key component of the proton channel; it plays a direct role in the translocation of protons across the membrane. The sequence is that of ATP synthase subunit a from Erythrobacter litoralis (strain HTCC2594).